Reading from the N-terminus, the 160-residue chain is MKQKYSKKSKKWIYITTIIFILILDISSKRLIIKYIKTYDTKKIFSVLNFFHVHNHGAAFSFLSDQNGWQKWFLSTVSILTILVMTRIITKLKKQETKKITAYSLIIAGATGNLIDRIFYGFVVDFIDIHINDWHFATFNIADCSIFIGIIILMRINYST.

Transmembrane regions (helical) follow at residues 13–33 (IYIT…RLII), 72–92 (WFLS…ITKL), and 104–124 (SLII…GFVV). Active-site residues include Asp125 and Asp143. The helical transmembrane segment at 134 to 154 (WHFATFNIADCSIFIGIIILM) threads the bilayer.

The protein belongs to the peptidase A8 family.

The protein resides in the cell inner membrane. It catalyses the reaction Release of signal peptides from bacterial membrane prolipoproteins. Hydrolyzes -Xaa-Yaa-Zaa-|-(S,diacylglyceryl)Cys-, in which Xaa is hydrophobic (preferably Leu), and Yaa (Ala or Ser) and Zaa (Gly or Ala) have small, neutral side chains.. It participates in protein modification; lipoprotein biosynthesis (signal peptide cleavage). Its function is as follows. This protein specifically catalyzes the removal of signal peptides from prolipoproteins. The sequence is that of Lipoprotein signal peptidase from Buchnera aphidicola subsp. Acyrthosiphon pisum (strain APS) (Acyrthosiphon pisum symbiotic bacterium).